The primary structure comprises 410 residues: Platelet-activating factor acetylhydrolase IB subunit beta (410 aa).

The interval 1–38 (MVLSQRQRDELNRAIADYLRSNGYEEAYSVFKKEAELD) is required for self-association and interaction with PAFAH1B2 and PAFAH1B3. The interval 1 to 66 (MVLSQRQRDE…SVIRLQKKVM (66 aa)) is interaction with NDE1. Residues 1 to 102 (MVLSQRQRDE…EWIPRPPEKY (102 aa)) are interaction with NDEL1. In terms of domain architecture, LisH spans 7–39 (QRDELNRAIADYLRSNGYEEAYSVFKKEAELDV). Position 53 is an N6-acetyllysine (K53). Positions 56-82 (TSVIRLQKKVMELESKLNEAKEEFTSG) form a coiled coil. The tract at residues 83–410 (GPLGQKRDPK…DQTVKVWECR (328 aa)) is interaction with dynein and dynactin. WD repeat units lie at residues 106–147 (GHRS…RTLK), 148–187 (GHTD…CIRT), 190–229 (GHDH…CVKT), 232–271 (GHRE…CKAE), 274–333 (EHEH…CLMT), 336–377 (GHDN…KTLN), and 378–410 (AHEH…WECR). Phosphoserine is present on S109. The interval 367-409 (YKNKRCMKTLNAHEHFVTSLDFHKTAPYVVTGSVDQTVKVWEC) is interaction with DCX. Residues 388 to 410 (FHKTAPYVVTGSVDQTVKVWECR) are interaction with NDEL1.

Belongs to the WD repeat LIS1/nudF family. In terms of assembly, component of the cytosolic PAF-AH (I) heterotetrameric enzyme, which is composed of PAFAH1B1 (beta), PAFAH1B2 (alpha2) and PAFAH1B3 (alpha1) subunits. The catalytic activity of the enzyme resides in the alpha1 (PAFAH1B3) and alpha2 (PAFAH1B2) subunits, whereas the beta subunit (PAFAH1B1) has regulatory activity. Trimer formation is not essential for the catalytic activity. Interacts with the catalytic dimer of PAF-AH (I) heterotetrameric enzyme: interacts with PAFAH1B2 homodimer (alpha2/alpha2 homodimer), PAFAH1B3 homodimer (alpha1/alpha1 homodimer) and PAFAH1B2-PAFAH1B3 heterodimer (alpha2/alpha1 heterodimer). Interacts with IQGAP1, KATNB1 and NUDC. Interacts with DAB1 when DAB1 is phosphorylated in response to RELN/reelin signaling. Can self-associate. Interacts with DCX, dynein, dynactin, NDE1, NDEL1 and RSN. Interacts with DISC1, and this interaction is enhanced by NDEL1. Interacts with INTS13. Interacts with DCDC1. In terms of tissue distribution, fairly ubiquitous expression in both the frontal and occipital areas of the brain.

It is found in the cytoplasm. The protein resides in the cytoskeleton. Its subcellular location is the microtubule organizing center. The protein localises to the centrosome. It localises to the spindle. It is found in the nucleus membrane. Its function is as follows. Regulatory subunit (beta subunit) of the cytosolic type I platelet-activating factor (PAF) acetylhydrolase (PAF-AH (I)), an enzyme that catalyzes the hydrolyze of the acetyl group at the sn-2 position of PAF and its analogs and participates in PAF inactivation. Regulates the PAF-AH (I) activity in a catalytic dimer composition-dependent manner. Required for proper activation of Rho GTPases and actin polymerization at the leading edge of locomoting cerebellar neurons and postmigratory hippocampal neurons in response to calcium influx triggered via NMDA receptors. Positively regulates the activity of the minus-end directed microtubule motor protein dynein. May enhance dynein-mediated microtubule sliding by targeting dynein to the microtubule plus end. Required for several dynein- and microtubule-dependent processes such as the maintenance of Golgi integrity, the peripheral transport of microtubule fragments and the coupling of the nucleus and centrosome. Required during brain development for the proliferation of neuronal precursors and the migration of newly formed neurons from the ventricular/subventricular zone toward the cortical plate. Neuronal migration involves a process called nucleokinesis, whereby migrating cells extend an anterior process into which the nucleus subsequently translocates. During nucleokinesis dynein at the nuclear surface may translocate the nucleus towards the centrosome by exerting force on centrosomal microtubules. May also play a role in other forms of cell locomotion including the migration of fibroblasts during wound healing. Required for dynein recruitment to microtubule plus ends and BICD2-bound cargos. May modulate the Reelin pathway through interaction of the PAF-AH (I) catalytic dimer with VLDLR. The protein is Platelet-activating factor acetylhydrolase IB subunit beta of Homo sapiens (Human).